The chain runs to 401 residues: Tryptophan synthase beta chain (401 aa).

Lysine 92 carries the post-translational modification N6-(pyridoxal phosphate)lysine.

Belongs to the TrpB family. Tetramer of two alpha and two beta chains. It depends on pyridoxal 5'-phosphate as a cofactor.

The catalysed reaction is (1S,2R)-1-C-(indol-3-yl)glycerol 3-phosphate + L-serine = D-glyceraldehyde 3-phosphate + L-tryptophan + H2O. It participates in amino-acid biosynthesis; L-tryptophan biosynthesis; L-tryptophan from chorismate: step 5/5. The beta subunit is responsible for the synthesis of L-tryptophan from indole and L-serine. This Vesicomyosocius okutanii subsp. Calyptogena okutanii (strain HA) protein is Tryptophan synthase beta chain.